The sequence spans 225 residues: Movement and silencing protein TGBp1 (225 aa).

Residues 1 to 110 (MDFAELLESK…KDLLKPHYIC (110 aa)) enclose the (+)RNA virus helicase ATP-binding domain. The (+)RNA virus helicase C-terminal domain occupies 111–225 (PTTHRFGHST…LTPDAPSTSS (115 aa)).

It belongs to the Tymovirales TGBp1 protein family. As to quaternary structure, homodimer and homooligomer. Interacts with capsid protein. Interacts with host AGO1; this interaction targets the host protein for degradation, thereby suppressing the antiviral RNA silencing.

The protein localises to the host cytoplasm. Transports viral genome to neighboring plant cells directly through plasmosdesmata, without any budding. The movement protein allows efficient cell to cell propagation, by bypassing the host cell wall barrier. Increases plasmodesma size exclusion limit. Acts as a suppressor of RNA-mediated gene silencing, also known as post-transcriptional gene silencing (PTGS), a mechanism of plant viral defense that limits the accumulation of viral RNAs. This chain is Movement and silencing protein TGBp1, found in Citrus (ICRSV).